A 437-amino-acid polypeptide reads, in one-letter code: Putative ABC transporter ATP-binding protein CTC_00753 (437 aa).

2 ABC transporter domains span residues 1–143 (MERE…LPTI) and 179–416 (LKFK…QISK). 219–226 (GENGAGKS) provides a ligand contact to ATP.

This sequence belongs to the ABC transporter superfamily.

It localises to the cell membrane. In terms of biological role, probably part of an ABC transporter complex. Responsible for energy coupling to the transport system. This chain is Putative ABC transporter ATP-binding protein CTC_00753, found in Clostridium tetani (strain Massachusetts / E88).